A 187-amino-acid chain; its full sequence is Accessory gene regulator protein B (187 aa).

5 consecutive transmembrane segments (helical) span residues 49–69 (IAYI…FYLI), 82–102 (FWCY…VLHF), 107–127 (TLMM…APAA), 143–163 (YFSI…KEPY), and 164–184 (TQFI…IYYS).

The protein belongs to the AgrB family.

The protein resides in the cell membrane. In terms of biological role, essential for the production of a quorum sensing system signal molecule, the autoinducing peptide (AIP). This quorum sensing system is responsible for the regulation of the expression of virulence factor genes. Involved in the proteolytic processing of AgrD, the precursor of AIP. The polypeptide is Accessory gene regulator protein B (Staphylococcus aureus (strain MW2)).